We begin with the raw amino-acid sequence, 450 residues long: MSRKYFGTDGVRGKVGTFPITPDFAMRLGWAAGTVLASTGTKEVLIGKDTRISGYMLESAMEAGFSAAGVNVALIGPMPTPAVAYLASTFRADAGVVISASHNPFYDNGIKFFSNTGTKLNDAQELEIEALLEQALEHNALQCVASEKLGKVRRIDDAAGRYIEFCKGTFPNHLSLAGLKIVVDSAHGAAYHIAPNVYRELGAEVISINDKPNGVNINDHCGATHLDSLQSAVMIHEADLGIALDGDADRVMFVDHNGHVVDGDEILFILAQAAYQKGEMQGGVVGTLMSNLGLELALKGMDIPFVRAKVGDRYVVEQLKETGWQLGGEGSGHILSLKHASTGDGIVASLQVLKAVLESGKRLAELKAEMTKLPQVLINVRLTSGCADSILSKDSVKQAVIAAEEVLGNQGRVLLRKSGTEPLIRVMVESTDISLTQQQAEYIAQAVKVA.

The Phosphoserine intermediate role is filled by S101. Mg(2+) contacts are provided by S101, D245, D247, and D249. S101 is subject to Phosphoserine.

Belongs to the phosphohexose mutase family. Mg(2+) serves as cofactor. In terms of processing, activated by phosphorylation.

The enzyme catalyses alpha-D-glucosamine 1-phosphate = D-glucosamine 6-phosphate. Catalyzes the conversion of glucosamine-6-phosphate to glucosamine-1-phosphate. The chain is Phosphoglucosamine mutase 2 from Shewanella sp. (strain MR-4).